We begin with the raw amino-acid sequence, 141 residues long: Nucleoside diphosphate kinase (141 aa).

Lys-11, Phe-59, Arg-87, Thr-93, Arg-104, and Asn-114 together coordinate ATP. The Pros-phosphohistidine intermediate role is filled by His-117.

It belongs to the NDK family. As to quaternary structure, homotetramer. Mg(2+) is required as a cofactor.

The protein resides in the cytoplasm. It carries out the reaction a 2'-deoxyribonucleoside 5'-diphosphate + ATP = a 2'-deoxyribonucleoside 5'-triphosphate + ADP. The catalysed reaction is a ribonucleoside 5'-diphosphate + ATP = a ribonucleoside 5'-triphosphate + ADP. Functionally, major role in the synthesis of nucleoside triphosphates other than ATP. The ATP gamma phosphate is transferred to the NDP beta phosphate via a ping-pong mechanism, using a phosphorylated active-site intermediate. This Pseudomonas fluorescens (strain Pf0-1) protein is Nucleoside diphosphate kinase.